The chain runs to 141 residues: uncharacterized protein (141 aa).

A run of 4 helical transmembrane segments spans residues 7-24 (YRIPFGIGYLLGTFFLSP), 39-56 (FLKFLWFPFWVFSRHRGI), 69-91 (FYLIFIFFFLYFAVLGVLSILGF), and 116-138 (FFILGLIVADLLHIVLDIVSSFI).

It localises to the cell membrane. This is an uncharacterized protein from Aquifex aeolicus (strain VF5).